The primary structure comprises 676 residues: ATP-dependent RNA helicase dbp-9 (676 aa).

The segment at 1-97 (MAKRKLNETD…SEKDDADLTF (97 aa)) is disordered. Residues 70 to 90 (QQLKDEQKQQDEKDEKKQSEK) are compositionally biased toward basic and acidic residues. Positions 95-123 (LTFSDLGLDPRLVQAVAKQSFEKPTLVQR) match the Q motif motif. The region spanning 126 to 304 (IPLALAGQDV…KGFFCRNPTM (179 aa)) is the Helicase ATP-binding domain. An ATP-binding site is contributed by 139-146 (AKTGSGKT). The DEAD box motif lies at 251–254 (DEAD). Residues 317–541 (KLTQFYVKCG…PYNFNKDQME (225 aa)) form the Helicase C-terminal domain. Over residues 410–432 (EDEKTEEKKEEQGEKKEGDEKKN) the composition is skewed to basic and acidic residues. Disordered regions lie at residues 410-444 (EDEKTEEKKEEQGEKKEGDEKKNGKGKKKKGRRDQ) and 633-676 (FKKQ…RVRK). A compositionally biased stretch (basic residues) spans 642–663 (TRGKKGAKGGKGGHGKYKKGPG).

This sequence belongs to the DEAD box helicase family. DDX56/DBP9 subfamily.

The protein localises to the nucleus. It is found in the nucleolus. The catalysed reaction is ATP + H2O = ADP + phosphate + H(+). Its function is as follows. ATP-binding RNA helicase involved in the biogenesis of 60S ribosomal subunits and is required for the normal formation of 25S and 5.8S rRNAs. In Neurospora crassa (strain ATCC 24698 / 74-OR23-1A / CBS 708.71 / DSM 1257 / FGSC 987), this protein is ATP-dependent RNA helicase dbp-9 (dbp-9).